Consider the following 535-residue polypeptide: Suppressor of cytokine signaling 6 (535 aa).

The segment covering 80 to 89 (RLSAKQKSKG) has biased composition (basic residues). Positions 80–105 (RLSAKQKSKGKAGTPSGSSADEDTFS) are disordered. In terms of domain architecture, SH2 spans 384 to 491 (WYWGPITRWE…TYPVRLTNPV (108 aa)). The region spanning 486–535 (RLTNPVSRFMQVRSLQYLCRFVIRQYTRIDLIQKLPLPNKMKDYLQEKHY) is the SOCS box domain.

As to quaternary structure, interacts with RBCK1. Interacts with phosphorylated IRS4. Interacts with PIM3. Interacts with KIT (phosphorylated).

It participates in protein modification; protein ubiquitination. In terms of biological role, SOCS family proteins form part of a classical negative feedback system that regulates cytokine signal transduction. May be a substrate recognition component of a SCF-like ECS (Elongin BC-CUL2/5-SOCS-box protein) E3 ubiquitin-protein ligase complex which mediates the ubiquitination and subsequent proteasomal degradation of target proteins. Regulates KIT degradation by ubiquitination of the tyrosine-phosphorylated receptor. The sequence is that of Suppressor of cytokine signaling 6 (SOCS6) from Homo sapiens (Human).